Reading from the N-terminus, the 528-residue chain is Peptide chain release factor 3 (528 aa).

Residues 11-279 form the tr-type G domain; it reads SRRRTFAIIS…GLVDWAPSPQ (269 aa). GTP-binding positions include 20 to 27, 88 to 92, and 142 to 145; these read SHPDAGKT, DTPGH, and NKLD.

Belongs to the TRAFAC class translation factor GTPase superfamily. Classic translation factor GTPase family. PrfC subfamily.

The protein resides in the cytoplasm. Functionally, increases the formation of ribosomal termination complexes and stimulates activities of RF-1 and RF-2. It binds guanine nucleotides and has strong preference for UGA stop codons. It may interact directly with the ribosome. The stimulation of RF-1 and RF-2 is significantly reduced by GTP and GDP, but not by GMP. This Pseudoalteromonas atlantica (strain T6c / ATCC BAA-1087) protein is Peptide chain release factor 3.